Reading from the N-terminus, the 219-residue chain is Large ribosomal subunit protein uL3 (219 aa).

Positions 134 to 153 (RASHGNSRSHNVPGSIGMAQ) are disordered. N5-methylglutamine is present on Gln-153.

Belongs to the universal ribosomal protein uL3 family. Part of the 50S ribosomal subunit. Forms a cluster with proteins L14 and L19. In terms of processing, methylated by PrmB.

Functionally, one of the primary rRNA binding proteins, it binds directly near the 3'-end of the 23S rRNA, where it nucleates assembly of the 50S subunit. This Paraburkholderia phytofirmans (strain DSM 17436 / LMG 22146 / PsJN) (Burkholderia phytofirmans) protein is Large ribosomal subunit protein uL3.